A 216-amino-acid polypeptide reads, in one-letter code: MILDILVKLNKLKIILASTSPRRIEYLGKLGVKFEIVESKFKEDLDKSQFQSVYDYCLENAKLKAIHAGIQLKEQNQQPNIIIGSDSIVVYDNKIFEKPKSLEEAKSMLTLLSGKIHTVCTAVHIEFFNENTNSKGSSSFYTLTNVEFDQLSPELINYYVDNFKPLDKAGSYGIQQTPAASFIKSINGDFYNVTGLPIHDLSINLRKIYVDNFLEK.

D86 (proton acceptor) is an active-site residue.

It belongs to the Maf family. Requires a divalent metal cation as cofactor.

It localises to the cytoplasm. The catalysed reaction is a ribonucleoside 5'-triphosphate + H2O = a ribonucleoside 5'-phosphate + diphosphate + H(+). It carries out the reaction a 2'-deoxyribonucleoside 5'-triphosphate + H2O = a 2'-deoxyribonucleoside 5'-phosphate + diphosphate + H(+). Functionally, nucleoside triphosphate pyrophosphatase. May have a dual role in cell division arrest and in preventing the incorporation of modified nucleotides into cellular nucleic acids. The chain is Nucleoside triphosphate pyrophosphatase from Dictyostelium discoideum (Social amoeba).